The chain runs to 136 residues: Aspartate 1-decarboxylase (136 aa).

Ser-25 functions as the Schiff-base intermediate with substrate; via pyruvic acid in the catalytic mechanism. Ser-25 bears the Pyruvic acid (Ser) mark. Thr-57 serves as a coordination point for substrate. Tyr-58 (proton donor) is an active-site residue. Substrate is bound at residue 73 to 75; that stretch reads GAA.

Belongs to the PanD family. Heterooctamer of four alpha and four beta subunits. Requires pyruvate as cofactor. Post-translationally, is synthesized initially as an inactive proenzyme, which is activated by self-cleavage at a specific serine bond to produce a beta-subunit with a hydroxyl group at its C-terminus and an alpha-subunit with a pyruvoyl group at its N-terminus.

Its subcellular location is the cytoplasm. It carries out the reaction L-aspartate + H(+) = beta-alanine + CO2. It functions in the pathway cofactor biosynthesis; (R)-pantothenate biosynthesis; beta-alanine from L-aspartate: step 1/1. Functionally, catalyzes the pyruvoyl-dependent decarboxylation of aspartate to produce beta-alanine. This chain is Aspartate 1-decarboxylase, found in Acidothermus cellulolyticus (strain ATCC 43068 / DSM 8971 / 11B).